A 305-amino-acid chain; its full sequence is Sulfate adenylyltransferase subunit 2 (305 aa).

It belongs to the PAPS reductase family. CysD subfamily. As to quaternary structure, heterodimer composed of CysD, the smaller subunit, and CysN.

It catalyses the reaction sulfate + ATP + H(+) = adenosine 5'-phosphosulfate + diphosphate. Its pathway is sulfur metabolism; hydrogen sulfide biosynthesis; sulfite from sulfate: step 1/3. Functionally, with CysN forms the ATP sulfurylase (ATPS) that catalyzes the adenylation of sulfate producing adenosine 5'-phosphosulfate (APS) and diphosphate, the first enzymatic step in sulfur assimilation pathway. APS synthesis involves the formation of a high-energy phosphoric-sulfuric acid anhydride bond driven by GTP hydrolysis by CysN coupled to ATP hydrolysis by CysD. The protein is Sulfate adenylyltransferase subunit 2 of Pseudomonas syringae pv. tomato (strain ATCC BAA-871 / DC3000).